The chain runs to 218 residues: Glutathione S-transferase class-mu 26 kDa isozyme (218 aa).

A GST N-terminal domain is found at 2–83 (SPILGYWKIK…YIADKHNMLG (82 aa)). Residues 7-8 (YW), 41-45 (WRNKK), 54-55 (NL), and 67-68 (QS) contribute to the glutathione site. The region spanning 85–203 (CPKERAEISM…KSSKYIAWPL (119 aa)) is the GST C-terminal domain. Tyr-111 serves as a coordination point for substrate.

This sequence belongs to the GST superfamily. Mu family. Homodimer.

It catalyses the reaction RX + glutathione = an S-substituted glutathione + a halide anion + H(+). Conjugation of reduced glutathione to a wide number of exogenous and endogenous hydrophobic electrophiles. Its function is as follows. GST isoenzymes appear to play a central role in the parasite detoxification system. Other functions are also suspected including a role in increasing the solubility of haematin in the parasite gut. The sequence is that of Glutathione S-transferase class-mu 26 kDa isozyme from Schistosoma japonicum (Blood fluke).